The primary structure comprises 191 residues: Holliday junction branch migration complex subunit RuvA (191 aa).

A domain I region spans residues Met-1–Gly-64. Residues Thr-65–Gly-137 form a domain II region. Residues Gly-137–Ala-141 form a flexible linker region. The domain III stretch occupies residues Val-142–Ala-191.

The protein belongs to the RuvA family. Homotetramer. Forms an RuvA(8)-RuvB(12)-Holliday junction (HJ) complex. HJ DNA is sandwiched between 2 RuvA tetramers; dsDNA enters through RuvA and exits via RuvB. An RuvB hexamer assembles on each DNA strand where it exits the tetramer. Each RuvB hexamer is contacted by two RuvA subunits (via domain III) on 2 adjacent RuvB subunits; this complex drives branch migration. In the full resolvosome a probable DNA-RuvA(4)-RuvB(12)-RuvC(2) complex forms which resolves the HJ.

It localises to the cytoplasm. Its function is as follows. The RuvA-RuvB-RuvC complex processes Holliday junction (HJ) DNA during genetic recombination and DNA repair, while the RuvA-RuvB complex plays an important role in the rescue of blocked DNA replication forks via replication fork reversal (RFR). RuvA specifically binds to HJ cruciform DNA, conferring on it an open structure. The RuvB hexamer acts as an ATP-dependent pump, pulling dsDNA into and through the RuvAB complex. HJ branch migration allows RuvC to scan DNA until it finds its consensus sequence, where it cleaves and resolves the cruciform DNA. In Janthinobacterium sp. (strain Marseille) (Minibacterium massiliensis), this protein is Holliday junction branch migration complex subunit RuvA.